A 261-amino-acid chain; its full sequence is Small ribosomal subunit protein uS2 (261 aa).

The protein belongs to the universal ribosomal protein uS2 family.

In Paracoccus denitrificans (strain Pd 1222), this protein is Small ribosomal subunit protein uS2.